The following is a 28-amino-acid chain: Kappa-buthitoxin-Tt2b (28 aa).

Disulfide bonds link Cys-2/Cys-24, Cys-7/Cys-20, and Cys-11/Cys-26.

Expressed by the venom gland.

It localises to the secreted. Blocks potassium channels Shaker-IR (with inactivation domain removed) and hKv1.2/KCNA2. The polypeptide is Kappa-buthitoxin-Tt2b (Tityus trivittatus (Argentinean scorpion)).